The primary structure comprises 474 residues: Photosystem II CP43 reaction center protein (474 aa).

Residues 1 to 14 (MKTLYSLRRFYPVE) constitute a propeptide that is removed on maturation. Thr-15 is modified (N-acetylthreonine). Phosphothreonine is present on Thr-15. Transmembrane regions (helical) follow at residues 69–93 (LFEVAHFVPEKPMYEQGLILLPHLA), 134–155 (LLGPETLEESFPFFGYVWKDRN), 178–201 (KALYFGGVYDTWAPGGGEMLRKIT), 256–276 (KPFAWARRALVWSGEAYLSYS), and 292–313 (WFNNTAYPSEFYGPTGPEASQA). Glu-368 lines the [CaMn4O5] cluster pocket. Residues 448–472 (RARAAAAGFEKGIDRDFEPVLSMTP) traverse the membrane as a helical segment.

The protein belongs to the PsbB/PsbC family. PsbC subfamily. As to quaternary structure, PSII is composed of 1 copy each of membrane proteins PsbA, PsbB, PsbC, PsbD, PsbE, PsbF, PsbH, PsbI, PsbJ, PsbK, PsbL, PsbM, PsbT, PsbX, PsbY, PsbZ, Psb30/Ycf12, at least 3 peripheral proteins of the oxygen-evolving complex and a large number of cofactors. It forms dimeric complexes. It depends on Binds multiple chlorophylls and provides some of the ligands for the Ca-4Mn-5O cluster of the oxygen-evolving complex. It may also provide a ligand for a Cl- that is required for oxygen evolution. PSII binds additional chlorophylls, carotenoids and specific lipids. as a cofactor.

It localises to the plastid. The protein resides in the chloroplast thylakoid membrane. Its function is as follows. One of the components of the core complex of photosystem II (PSII). It binds chlorophyll and helps catalyze the primary light-induced photochemical processes of PSII. PSII is a light-driven water:plastoquinone oxidoreductase, using light energy to abstract electrons from H(2)O, generating O(2) and a proton gradient subsequently used for ATP formation. The chain is Photosystem II CP43 reaction center protein from Citrus sinensis (Sweet orange).